Here is a 485-residue protein sequence, read N- to C-terminus: Ribulose bisphosphate carboxylase large chain (485 aa).

A propeptide spanning residues 1–2 (MS) is cleaved from the precursor. N-acetylproline is present on P3. N6,N6,N6-trimethyllysine is present on K14. Substrate-binding residues include N123 and T173. Catalysis depends on K175, which acts as the Proton acceptor. Substrate is bound at residue K177. Mg(2+)-binding residues include K201, D203, and E204. K201 bears the N6-carboxylysine mark. H294 (proton acceptor) is an active-site residue. Substrate contacts are provided by R295, H327, and S379.

The protein belongs to the RuBisCO large chain family. Type I subfamily. As to quaternary structure, heterohexadecamer of 8 large chains and 8 small chains; disulfide-linked. The disulfide link is formed within the large subunit homodimers. The cofactor is Mg(2+). Post-translationally, the disulfide bond which can form in the large chain dimeric partners within the hexadecamer appears to be associated with oxidative stress and protein turnover.

It localises to the plastid. It is found in the chloroplast. The enzyme catalyses 2 (2R)-3-phosphoglycerate + 2 H(+) = D-ribulose 1,5-bisphosphate + CO2 + H2O. The catalysed reaction is D-ribulose 1,5-bisphosphate + O2 = 2-phosphoglycolate + (2R)-3-phosphoglycerate + 2 H(+). Functionally, ruBisCO catalyzes two reactions: the carboxylation of D-ribulose 1,5-bisphosphate, the primary event in carbon dioxide fixation, as well as the oxidative fragmentation of the pentose substrate in the photorespiration process. Both reactions occur simultaneously and in competition at the same active site. The protein is Ribulose bisphosphate carboxylase large chain of Helianthus annuus (Common sunflower).